The primary structure comprises 132 residues: HLA class I histocompatibility antigen protein P5 (132 aa).

As to expression, expressed in lymphoid tissues; Detected in spleen as well as in B-cell lines, NK cell lines and activated lymphocytes.

This chain is HLA class I histocompatibility antigen protein P5 (HCP5), found in Homo sapiens (Human).